The chain runs to 426 residues: MKLKSRYTSLISVVSIFFSSMVMAESDIVISVDEGVSIAQPIAVVPFKVNGGVSEDVGQVVADDLRNSGKFTPIQRAKLPSHPASVAEINSQQWTDIGVDVVVVGQITPANNGYNVAYQLVDTLSNPAVVLVQGSFNVPATQMRQAAHTVSDQIFEKLTQIRGAFRTKIAYVVQRGVSAYELRVADYDGFNAFTVVKSKEPLMSPEWSPNGSKLAYVTFENKRPQIVVHDLRSGQRSVVAALKGHNGAPAFSPDGSRLAFASNQDGELNIYIANINGGTPIKLTANVGNNTEPSWSPDGSIIYFTSDRAGSPQVYRMSSSGNDVIPIGTRGSYNAKASSDGKNLIMIAGDNVVKQDLTSGSTEVLSSTFLDESPSISPNGIMIIYSSTKGTSKVLQLVSADGRFKANLPGAEGQFKFPAWSPYLTK.

An N-terminal signal peptide occupies residues 1 to 24 (MKLKSRYTSLISVVSIFFSSMVMA).

Belongs to the TolB family. In terms of assembly, the Tol-Pal system is composed of five core proteins: the inner membrane proteins TolA, TolQ and TolR, the periplasmic protein TolB and the outer membrane protein Pal. They form a network linking the inner and outer membranes and the peptidoglycan layer.

It localises to the periplasm. In terms of biological role, part of the Tol-Pal system, which plays a role in outer membrane invagination during cell division and is important for maintaining outer membrane integrity. This chain is Tol-Pal system protein TolB, found in Haemophilus ducreyi (strain 35000HP / ATCC 700724).